Consider the following 604-residue polypeptide: Linalool synthase Tps-5042L13, chloroplastic (604 aa).

A chloroplast-targeting transit peptide spans Met-1 to Ser-34. (2E)-geranyl diphosphate contacts are provided by Arg-323, Asp-360, Asp-364, Arg-501, and Asp-504. Residues Asp-360 and Asp-364 each coordinate Mg(2+). Residues Asp-360–Asp-364 carry the DDXXD motif motif. Residues Asp-504, Thr-508, and Glu-512 each contribute to the Mg(2+) site.

This sequence belongs to the terpene synthase family. Tpsb subfamily. In terms of assembly, monomer. Requires Mg(2+) as cofactor. Mn(2+) is required as a cofactor.

Its subcellular location is the plastid. It is found in the chloroplast. The catalysed reaction is (2E)-geranyl diphosphate + H2O = linalool + diphosphate. It participates in secondary metabolite biosynthesis; terpenoid biosynthesis. Monoterpene synthase (mono-TPS) involved in the biosynthesis of monoterpenes natural products. Catalyzes the conversion of (2E)-geranyl diphosphate (GPP) into linalool. In Perilla frutescens (Beefsteak mint), this protein is Linalool synthase Tps-5042L13, chloroplastic.